We begin with the raw amino-acid sequence, 151 residues long: UPF0208 membrane protein Ent638_2839 (151 aa).

2 helical membrane-spanning segments follow: residues 46–65 (YAIR…QIAL) and 69–91 (LGPA…WWLG).

It belongs to the UPF0208 family.

Its subcellular location is the cell inner membrane. The protein is UPF0208 membrane protein Ent638_2839 of Enterobacter sp. (strain 638).